Consider the following 424-residue polypeptide: Geranylgeranyl pyrophosphate synthase D (424 aa).

Residues Pro42–Asn73 are disordered. Positions Ser58 to Ala67 are enriched in polar residues. Residues Lys147, Arg150, and His179 each coordinate isopentenyl diphosphate. Mg(2+) is bound by residues Asp186 and Asp190. Arg195 contributes to the dimethylallyl diphosphate binding site. Arg196 contributes to the isopentenyl diphosphate binding site. 5 residues coordinate dimethylallyl diphosphate: Lys274, Thr275, Gln311, Lys328, and Lys338.

It belongs to the FPP/GGPP synthase family. Mg(2+) serves as cofactor.

The protein localises to the cytoplasm. The catalysed reaction is isopentenyl diphosphate + dimethylallyl diphosphate = (2E)-geranyl diphosphate + diphosphate. It carries out the reaction isopentenyl diphosphate + (2E)-geranyl diphosphate = (2E,6E)-farnesyl diphosphate + diphosphate. The enzyme catalyses isopentenyl diphosphate + (2E,6E)-farnesyl diphosphate = (2E,6E,10E)-geranylgeranyl diphosphate + diphosphate. Its pathway is isoprenoid biosynthesis; farnesyl diphosphate biosynthesis; farnesyl diphosphate from geranyl diphosphate and isopentenyl diphosphate: step 1/1. It functions in the pathway isoprenoid biosynthesis; geranyl diphosphate biosynthesis; geranyl diphosphate from dimethylallyl diphosphate and isopentenyl diphosphate: step 1/1. It participates in isoprenoid biosynthesis; geranylgeranyl diphosphate biosynthesis; geranylgeranyl diphosphate from farnesyl diphosphate and isopentenyl diphosphate: step 1/1. Catalyzes the trans-addition of the 3 molecules of isopentenyl diphosphate (IPP) onto dimethylallyl diphosphate (DMAPP) to form geranylgeranyl pyrophosphate (GGDP). This is Geranylgeranyl pyrophosphate synthase D (GGS-D) from Phomopsis amygdali (Fusicoccum amygdali).